Consider the following 227-residue polypeptide: Cytochrome c oxidase subunit 2 (227 aa).

Topologically, residues 1-14 are mitochondrial intermembrane; the sequence is MAHAAQMGLQDATS. Residues 15–45 traverse the membrane as a helical segment; the sequence is PIMEELISFHDHALMIIFLISFLVLYALFLT. Residues 46–59 lie on the Mitochondrial matrix side of the membrane; sequence LTTKLTNTNITDAQ. The helical transmembrane segment at 60–87 threads the bilayer; it reads EMETVWTILPAIILVLIALPSLRILYLT. The Mitochondrial intermembrane segment spans residues 88–227; that stretch reads DEINDPSFTI…IFEMGPVFTL (140 aa). The Cu cation site is built by histidine 161, cysteine 196, glutamate 198, cysteine 200, histidine 204, and methionine 207. Glutamate 198 lines the Mg(2+) pocket.

Belongs to the cytochrome c oxidase subunit 2 family. In terms of assembly, component of the cytochrome c oxidase (complex IV, CIV), a multisubunit enzyme composed of 14 subunits. The complex is composed of a catalytic core of 3 subunits MT-CO1, MT-CO2 and MT-CO3, encoded in the mitochondrial DNA, and 11 supernumerary subunits COX4I, COX5A, COX5B, COX6A, COX6B, COX6C, COX7A, COX7B, COX7C, COX8 and NDUFA4, which are encoded in the nuclear genome. The complex exists as a monomer or a dimer and forms supercomplexes (SCs) in the inner mitochondrial membrane with NADH-ubiquinone oxidoreductase (complex I, CI) and ubiquinol-cytochrome c oxidoreductase (cytochrome b-c1 complex, complex III, CIII), resulting in different assemblies (supercomplex SCI(1)III(2)IV(1) and megacomplex MCI(2)III(2)IV(2)). Found in a complex with TMEM177, COA6, COX18, COX20, SCO1 and SCO2. Interacts with TMEM177 in a COX20-dependent manner. Interacts with COX20. Interacts with COX16. Requires Cu cation as cofactor.

Its subcellular location is the mitochondrion inner membrane. It carries out the reaction 4 Fe(II)-[cytochrome c] + O2 + 8 H(+)(in) = 4 Fe(III)-[cytochrome c] + 2 H2O + 4 H(+)(out). Component of the cytochrome c oxidase, the last enzyme in the mitochondrial electron transport chain which drives oxidative phosphorylation. The respiratory chain contains 3 multisubunit complexes succinate dehydrogenase (complex II, CII), ubiquinol-cytochrome c oxidoreductase (cytochrome b-c1 complex, complex III, CIII) and cytochrome c oxidase (complex IV, CIV), that cooperate to transfer electrons derived from NADH and succinate to molecular oxygen, creating an electrochemical gradient over the inner membrane that drives transmembrane transport and the ATP synthase. Cytochrome c oxidase is the component of the respiratory chain that catalyzes the reduction of oxygen to water. Electrons originating from reduced cytochrome c in the intermembrane space (IMS) are transferred via the dinuclear copper A center (CU(A)) of subunit 2 and heme A of subunit 1 to the active site in subunit 1, a binuclear center (BNC) formed by heme A3 and copper B (CU(B)). The BNC reduces molecular oxygen to 2 water molecules using 4 electrons from cytochrome c in the IMS and 4 protons from the mitochondrial matrix. The protein is Cytochrome c oxidase subunit 2 (MT-CO2) of Symphalangus syndactylus (Siamang).